The chain runs to 167 residues: Ureidoglycolate lyase (167 aa).

This sequence belongs to the ureidoglycolate lyase family. In terms of assembly, homodimer. Ni(2+) serves as cofactor.

It catalyses the reaction (S)-ureidoglycolate = urea + glyoxylate. It participates in nitrogen metabolism; (S)-allantoin degradation. Its function is as follows. Catalyzes the catabolism of the allantoin degradation intermediate (S)-ureidoglycolate, generating urea and glyoxylate. Involved in the utilization of allantoin as nitrogen source. The chain is Ureidoglycolate lyase from Pseudomonas fluorescens (strain ATCC BAA-477 / NRRL B-23932 / Pf-5).